The following is a 383-amino-acid chain: S-adenosylmethionine synthase (383 aa).

ATP is bound at residue His15. Asp17 provides a ligand contact to Mg(2+). Residue Glu43 participates in K(+) binding. The L-methionine site is built by Glu56 and Gln99. Residues Gln99 to Arg109 form a flexible loop region. Residues Asp164 to Lys166, Arg230 to Phe231, Asp239, Arg245 to Lys246, Ala262, and Lys266 contribute to the ATP site. Asp239 is a binding site for L-methionine. Lys270 provides a ligand contact to L-methionine.

Belongs to the AdoMet synthase family. In terms of assembly, homotetramer; dimer of dimers. The cofactor is Mg(2+). K(+) is required as a cofactor.

It localises to the cytoplasm. The catalysed reaction is L-methionine + ATP + H2O = S-adenosyl-L-methionine + phosphate + diphosphate. It functions in the pathway amino-acid biosynthesis; S-adenosyl-L-methionine biosynthesis; S-adenosyl-L-methionine from L-methionine: step 1/1. Its function is as follows. Catalyzes the formation of S-adenosylmethionine (AdoMet) from methionine and ATP. The overall synthetic reaction is composed of two sequential steps, AdoMet formation and the subsequent tripolyphosphate hydrolysis which occurs prior to release of AdoMet from the enzyme. The polypeptide is S-adenosylmethionine synthase (Mannheimia succiniciproducens (strain KCTC 0769BP / MBEL55E)).